Reading from the N-terminus, the 825-residue chain is AMP deaminase 2 (825 aa).

Residues 1–49 are disordered; that stretch reads MASYPSGSGKPKAKYPFKKRASLQASTAAPEARGGLGAPPLQSARSLPG. Residues 11-21 show a composition bias toward basic residues; that stretch reads PKAKYPFKKRA. The residue at position 22 (Ser-22) is a Phosphoserine. Arg-45 is subject to Omega-N-methylarginine. A phosphoserine mark is found at Ser-46, Ser-64, and Ser-80. Tyr-91 bears the Phosphotyrosine mark. Residues Ser-97 and Ser-114 each carry the phosphoserine modification. Thr-134 carries the post-translational modification Phosphothreonine. Ser-136 and Ser-138 each carry phosphoserine. 2 residues coordinate Zn(2+): His-364 and His-366. Residues His-366 and 435–440 each bind substrate; that span reads KFNAKY. Residue His-633 participates in Zn(2+) binding. Glu-636 contributes to the substrate binding site. Catalysis depends on His-655, which acts as the Proton acceptor. A Zn(2+)-binding site is contributed by Asp-710. 711-714 lines the substrate pocket; it reads DPLQ.

The protein belongs to the metallo-dependent hydrolases superfamily. Adenosine and AMP deaminases family. In terms of assembly, homotetramer. Zn(2+) is required as a cofactor. In terms of tissue distribution, highly expressed in cerebellum.

The enzyme catalyses AMP + H2O + H(+) = IMP + NH4(+). Its pathway is purine metabolism; IMP biosynthesis via salvage pathway; IMP from AMP: step 1/1. Functionally, AMP deaminase plays a critical role in energy metabolism. Catalyzes the deamination of AMP to IMP and plays an important role in the purine nucleotide cycle. The protein is AMP deaminase 2 of Homo sapiens (Human).